We begin with the raw amino-acid sequence, 269 residues long: tRNA (guanine-N(1)-)-methyltransferase (269 aa).

Residues glycine 115 and 139–144 (LGDYVL) each bind S-adenosyl-L-methionine.

It belongs to the RNA methyltransferase TrmD family. In terms of assembly, homodimer.

It localises to the cytoplasm. It catalyses the reaction guanosine(37) in tRNA + S-adenosyl-L-methionine = N(1)-methylguanosine(37) in tRNA + S-adenosyl-L-homocysteine + H(+). In terms of biological role, specifically methylates guanosine-37 in various tRNAs. This is tRNA (guanine-N(1)-)-methyltransferase from Pseudarthrobacter chlorophenolicus (strain ATCC 700700 / DSM 12829 / CIP 107037 / JCM 12360 / KCTC 9906 / NCIMB 13794 / A6) (Arthrobacter chlorophenolicus).